Consider the following 247-residue polypeptide: 5'-nucleotidase SurE (247 aa).

A divalent metal cation-binding residues include aspartate 8, aspartate 9, serine 39, and asparagine 91.

The protein belongs to the SurE nucleotidase family. The cofactor is a divalent metal cation.

The protein resides in the cytoplasm. The enzyme catalyses a ribonucleoside 5'-phosphate + H2O = a ribonucleoside + phosphate. In terms of biological role, nucleotidase that shows phosphatase activity on nucleoside 5'-monophosphates. This Chromobacterium violaceum (strain ATCC 12472 / DSM 30191 / JCM 1249 / CCUG 213 / NBRC 12614 / NCIMB 9131 / NCTC 9757 / MK) protein is 5'-nucleotidase SurE.